Reading from the N-terminus, the 533-residue chain is 2,3-bisphosphoglycerate-independent phosphoglycerate mutase (533 aa).

Positions 15 and 65 each coordinate Mn(2+). The active-site Phosphoserine intermediate is the S65. Substrate is bound by residues H126, 156–157 (RD), R188, R194, 258–261 (RPDR), and K331. Mn(2+) is bound by residues D398, H402, D439, H440, and H457.

The protein belongs to the BPG-independent phosphoglycerate mutase family. Monomer. Mn(2+) serves as cofactor.

It catalyses the reaction (2R)-2-phosphoglycerate = (2R)-3-phosphoglycerate. It participates in carbohydrate degradation; glycolysis; pyruvate from D-glyceraldehyde 3-phosphate: step 3/5. Functionally, catalyzes the interconversion of 2-phosphoglycerate and 3-phosphoglycerate. The chain is 2,3-bisphosphoglycerate-independent phosphoglycerate mutase from Nostoc sp. (strain PCC 7120 / SAG 25.82 / UTEX 2576).